The primary structure comprises 233 residues: Large ribosomal subunit protein uL1 (233 aa).

It belongs to the universal ribosomal protein uL1 family. As to quaternary structure, part of the 50S ribosomal subunit.

In terms of biological role, binds directly to 23S rRNA. The L1 stalk is quite mobile in the ribosome, and is involved in E site tRNA release. Functionally, protein L1 is also a translational repressor protein, it controls the translation of the L11 operon by binding to its mRNA. This chain is Large ribosomal subunit protein uL1, found in Proteus vulgaris.